The chain runs to 1873 residues: Kinesin-related protein 8 (1873 aa).

Positions 13-413 (CVRVALRVRP…LKYAYRARNI (401 aa)) constitute a Kinesin motor domain. Position 93-100 (93-100 (GQTGSGKT)) interacts with ATP. Disordered regions lie at residues 231 to 302 (NSPV…DERN), 463 to 567 (VSIP…SPTS), 778 to 797 (LDKD…YYED), 841 to 891 (KIDS…ARKT), 930 to 1008 (KQRV…TEQL), 1179 to 1207 (PQPL…QRSS), 1244 to 1267 (LPSQ…STSS), 1328 to 1360 (TTTT…NNSS), and 1403 to 1467 (NNIT…PRPD). Low complexity predominate over residues 232-247 (SPVTSSSTSSTSTSSS). A compositionally biased stretch (acidic residues) spans 280–297 (IDEDEEDDEEDEDDDIMS). The span at 473 to 567 (TPTLTNNNNN…NNTATPSPTS (95 aa)) shows a compositional bias: low complexity. Positions 715 to 933 (FENDSEELSD…KEIEVHKQRV (219 aa)) form a coiled coil. Composition is skewed to low complexity over residues 937–1005 (INSK…TPTT), 1182–1200 (LQSQ…NSEQ), 1244–1254 (LPSQQQLSSSQ), 1348–1358 (NNTNNNNNNNN), and 1423–1454 (SLQS…SNNN). 5 WD repeats span residues 1506 to 1546 (GHDG…NMLD), 1548 to 1587 (SSPG…NTNL), 1589 to 1628 (IFKT…KPLK), 1636 to 1673 (HHTG…LAQK), and 1677 to 1714 (PHHD…NLIN). The disordered stretch occupies residues 1758 to 1780 (NNNNNNSSNNNKSSSAPSSTTSS). WD repeat units lie at residues 1805–1842 (AHND…NSLL) and 1844–1873 (GHES…IWKC).

This sequence belongs to the TRAFAC class myosin-kinesin ATPase superfamily. Kinesin family.

The protein resides in the cytoplasm. It localises to the cytoskeleton. Its function is as follows. Microtubule-associated force-producing protein that plays a role in organelle transport. Its motor activity is directed toward the microtubule's plus end. Cooperates with kif10 and dynein to organize interphase microtubules. This Dictyostelium discoideum (Social amoeba) protein is Kinesin-related protein 8 (kif8).